Here is a 532-residue protein sequence, read N- to C-terminus: Phosphoenolpyruvate carboxykinase (ATP) (532 aa).

The substrate site is built by R60, Y194, and K200. ATP contacts are provided by residues K200, H219, and G237 to T245. 2 residues coordinate Mn(2+): K200 and H219. D258 is a Mn(2+) binding site. Residues E286, R324, and T449 each coordinate ATP. R324 contributes to the substrate binding site.

This sequence belongs to the phosphoenolpyruvate carboxykinase (ATP) family. Mn(2+) serves as cofactor.

The protein localises to the cytoplasm. It catalyses the reaction oxaloacetate + ATP = phosphoenolpyruvate + ADP + CO2. The protein operates within carbohydrate biosynthesis; gluconeogenesis. In terms of biological role, involved in the gluconeogenesis. Catalyzes the conversion of oxaloacetate (OAA) to phosphoenolpyruvate (PEP) through direct phosphoryl transfer between the nucleoside triphosphate and OAA. The protein is Phosphoenolpyruvate carboxykinase (ATP) of Cereibacter sphaeroides (strain ATCC 17025 / ATH 2.4.3) (Rhodobacter sphaeroides).